A 374-amino-acid chain; its full sequence is Protein RecA (374 aa).

Residue Gly77 to Thr84 participates in ATP binding. The tract at residues Ala355–Ala374 is disordered.

The protein belongs to the RecA family.

The protein resides in the cytoplasm. Functionally, can catalyze the hydrolysis of ATP in the presence of single-stranded DNA, the ATP-dependent uptake of single-stranded DNA by duplex DNA, and the ATP-dependent hybridization of homologous single-stranded DNAs. It interacts with LexA causing its activation and leading to its autocatalytic cleavage. The protein is Protein RecA of Synechococcus sp. (strain CC9605).